A 731-amino-acid polypeptide reads, in one-letter code: Putative pentatricopeptide repeat-containing protein At1g17630 (731 aa).

15 PPR repeats span residues 88–118, 122–156, 157–191, 192–222, 223–257, 258–292, 293–327, 328–358, 359–393, 398–432, 433–467, 468–498, 499–533, 534–569, and 570–600; these read SGSLAANLISVYARLGLLLDARNVFETVSLV, DLRLWNSILKANVSHGLYENALELYRGMRQRGLTG, DGYILPLILRACRYLGRFGLCRAFHTQVIQIGLKE, NLHVVNELLTLYPKAGRMGDAYNLFVEMPVR, NRMSWNVMIKGFSQEYDCESAVKIFEWMQREEFKP, DEVTWTSVLSCHSQCGKFEDVLKYFHLMRMSGNAV, SGEALAVFFSVCAELEALSIAEKVHGYVIKGGFEE, YLPSRNALIHVYGKQGKVKDAEHLFRQIRNK, GIESWNSLITSFVDAGKLDEALSLFSELEEMNHVC, NVVTWTSVIKGCNVQGRGDDSLEYFRQMQFSKVLA, NSVTICCILSICAELPALNLGREIHGHVIRTSMSE, NILVQNALVNMYAKCGLLSEGSLVFEAIRDK, DLISWNSIIKGYGMHGFAEKALSMFDRMISSGFHP, DGIALVAVLSACSHAGLVEKGREIFYSMSKRFGLEP, and QQEHYACIVDLLGRVGFLKEASEIVKNMPME. A type E motif region spans residues 605–680; sequence VLGALLNSCR…VSGSSWIEVK (76 aa). A type E(+) motif region spans residues 681–711; sequence KKKYKFSSGSIVQSEFETIYPVLEDLVSHML.

Belongs to the PPR family. PCMP-E subfamily.

The protein is Putative pentatricopeptide repeat-containing protein At1g17630 (PCMP-E72) of Arabidopsis thaliana (Mouse-ear cress).